The chain runs to 91 residues: Small ribosomal subunit protein bS20 (91 aa).

Positions 1-26 are disordered; sequence MANLKSSKKDIRRTARRKERNGEDRT.

This sequence belongs to the bacterial ribosomal protein bS20 family.

Its function is as follows. Binds directly to 16S ribosomal RNA. This is Small ribosomal subunit protein bS20 from Leptospira biflexa serovar Patoc (strain Patoc 1 / Ames).